A 140-amino-acid chain; its full sequence is 3-hydroxyacyl-[acyl-carrier-protein] dehydratase FabZ (140 aa).

The active site involves H47.

This sequence belongs to the thioester dehydratase family. FabZ subfamily.

Its subcellular location is the cytoplasm. It carries out the reaction a (3R)-hydroxyacyl-[ACP] = a (2E)-enoyl-[ACP] + H2O. Its function is as follows. Involved in unsaturated fatty acids biosynthesis. Catalyzes the dehydration of short chain beta-hydroxyacyl-ACPs and long chain saturated and unsaturated beta-hydroxyacyl-ACPs. The sequence is that of 3-hydroxyacyl-[acyl-carrier-protein] dehydratase FabZ from Streptococcus sanguinis (strain SK36).